A 314-amino-acid chain; its full sequence is uncharacterized protein (314 aa).

Transmembrane regions (helical) follow at residues 23-43 (LALG…MALF) and 98-118 (MASG…GPLT). The segment covering 165–184 (GLGSGAGGGDVGGGGAGGTT) has biased composition (gly residues). Positions 165-314 (GLGSGAGGGD…APDEKTDAGE (150 aa)) are disordered. The span at 190 to 202 (GPPPVPTSSPPTT) shows a compositional bias: pro residues. Low complexity-rich tracts occupy residues 203–212 (PAGAPTKSAT) and 219–232 (ASPA…AGMP). A helical membrane pass occupies residues 221–241 (PASAHMGAAGMPMVPPGAMGA). A compositionally biased stretch (basic and acidic residues) spans 294-314 (LLPEHKDFGRIAPDEKTDAGE).

It localises to the cell membrane. This is an uncharacterized protein from Mycobacterium tuberculosis (strain ATCC 25618 / H37Rv).